The sequence spans 162 residues: Photosystem II extrinsic protein V (162 aa).

Residues 1–25 (MLKRCLWLVVTVLFAWQVFNGTAIA) form the signal peptide. Positions 62, 65, 66, and 117 each coordinate heme c.

The protein belongs to the cytochrome c family. PsbV subfamily. As to quaternary structure, PSII is composed of 1 copy each of membrane proteins PsbA, PsbB, PsbC, PsbD, PsbE, PsbF, PsbH, PsbI, PsbJ, PsbK, PsbL, PsbM, PsbT, PsbX, PsbY, PsbZ, Psb30/Ycf12, peripheral proteins PsbO, CyanoQ (PsbQ), PsbU, PsbV and a large number of cofactors. It forms dimeric complexes. The cofactor is heme c.

It is found in the cellular thylakoid membrane. In terms of biological role, one of the extrinsic, lumenal subunits of photosystem II (PSII). PSII is a light-driven water plastoquinone oxidoreductase, using light energy to abstract electrons from H(2)O, generating a proton gradient subsequently used for ATP formation. The extrinsic proteins stabilize the structure of photosystem II oxygen-evolving complex (OEC), the ion environment of oxygen evolution and protect the OEC against heat-induced inactivation. Low-potential cytochrome c that plays a role in the OEC of PSII. This chain is Photosystem II extrinsic protein V, found in Cyanothece sp. (strain PCC 7425 / ATCC 29141).